A 345-amino-acid polypeptide reads, in one-letter code: MEFQLFSPYTIKDVTLKNRIIMSPMCMYSSENEDGQVTNFHLVHYGTRAAGQVGLVMIEATAVLPEGRISNKDLGIWDDNLIEGLHKTTTFIHNNGAKAAIQLAHAGRKAELETDAFAPSAIPFNDRMKIPVEMNKQQIKETVSAFQKAALRSKRAGVDVIELHGAHGYLINEFLSPLSNKRIDEYGGSPENRYRFLREIIDAVNEVWNGPLFVRISANDYHPDGLTVQDYVQYTGWMKEQGVDLIDCSSGAVVPAHIDVYPGYQVQYAKHIKEHVNIATGAVGLITTGSQAEQILNNNEADLIFIGRELLRNPYFPRIAANELGFELKEPYQYRRAPGKIKTNK.

An FMN-binding site is contributed by Ser-23–Cys-26. Tyr-28 contributes to the substrate binding site. FMN is bound by residues Ala-60 and Gln-102. A substrate-binding site is contributed by His-164–His-167. Residues Arg-215 and Gly-307 to Arg-308 each bind FMN.

This sequence belongs to the NADH:flavin oxidoreductase/NADH oxidase family. NamA subfamily. Homotetramer. The cofactor is FMN.

The enzyme catalyses A + NADPH + H(+) = AH2 + NADP(+). Functionally, catalyzes the reduction of the double bond of an array of alpha,beta-unsaturated aldehydes and ketones. It also reduces the nitro group of nitroester and nitroaromatic compounds. It could have a role in detoxification processes. The polypeptide is NADPH dehydrogenase (Bacillus mycoides (strain KBAB4) (Bacillus weihenstephanensis)).